Reading from the N-terminus, the 4885-residue chain is Centrosome-associated protein CEP530 (4885 aa).

Residues 1437–1528 (VAEYEAETRG…GREKDQLRSE (92 aa)) adopt a coiled-coil conformation.

Its subcellular location is the cytoplasm. It is found in the cytoskeleton. It localises to the microtubule organizing center. The protein localises to the centrosome. Its function is as follows. Required for proper nuclei segregation during the cell division. Plays a role in coordination of karyokinesis and cytokinesis during the tachyzoite cell cycle. The polypeptide is Centrosome-associated protein CEP530 (Toxoplasma gondii (strain ATCC 50611 / Me49)).